Reading from the N-terminus, the 333-residue chain is Anthranilate phosphoribosyltransferase (333 aa).

5-phospho-alpha-D-ribose 1-diphosphate-binding positions include Gly-78, 81–82 (GD), Thr-86, 88–91 (NVST), 106–114 (KHGNYSVSS), and Ser-118. Residue Gly-78 participates in anthranilate binding. Ser-90 is a Mg(2+) binding site. Asn-109 is an anthranilate binding site. Position 164 (Arg-164) interacts with anthranilate. Mg(2+) contacts are provided by Asp-222 and Glu-223.

This sequence belongs to the anthranilate phosphoribosyltransferase family. Homodimer. It depends on Mg(2+) as a cofactor.

The catalysed reaction is N-(5-phospho-beta-D-ribosyl)anthranilate + diphosphate = 5-phospho-alpha-D-ribose 1-diphosphate + anthranilate. It participates in amino-acid biosynthesis; L-tryptophan biosynthesis; L-tryptophan from chorismate: step 2/5. In terms of biological role, catalyzes the transfer of the phosphoribosyl group of 5-phosphorylribose-1-pyrophosphate (PRPP) to anthranilate to yield N-(5'-phosphoribosyl)-anthranilate (PRA). This is Anthranilate phosphoribosyltransferase from Natronomonas pharaonis (strain ATCC 35678 / DSM 2160 / CIP 103997 / JCM 8858 / NBRC 14720 / NCIMB 2260 / Gabara) (Halobacterium pharaonis).